The sequence spans 478 residues: MNNSFTLKQQWFGNIRKDILAGILVALALIPEAIGFSIIAGVDPMVGLYASFCIAIIISIFGGRPGMISAATGSMAVVMVSLVADHGLQYLFAATILTGIIQVILGISKIARLMKFIPRSVMIGFVNALAILIFSAQLPQFEGASWSMYAMLAGSLVIIYVLPRFTTAVPSPLVAIIVMTIIAVTFHVDVRTVGDMGNISSSLPHFLIPDVPFTFETLQIIFPYSIALAFVGLLESLLTAQIIDEMTDTDSDKNKESRGQGIANIVTGFFGGMAGCAMIGQSVINTKAGGRGRLSAFVAGAFLMFLIAVLSHVVVKIPMAALVAVMVMVSVGTFDWSSLKGLKKAPLTDSIVMVVTVVTVVVTDDLSKGVFVGVLLSAVFFVAKISKLKIVSHAEDQKLRTYQVKGQIFFASVTDLTNAFIYQEDIERVVIDLTEAHVWDDSGAAALDKIVAKFKEQGIEAELKGLNKASKSLMKQMA.

A run of 12 helical transmembrane segments spans residues 19–39 (ILAGILVALALIPEAIGFSII), 42–62 (VDPMVGLYASFCIAIIISIFG), 65–85 (PGMISAATGSMAVVMVSLVAD), 87–107 (GLQYLFAATILTGIIQVILGI), 121–141 (VMIGFVNALAILIFSAQLPQF), 143–163 (GASWSMYAMLAGSLVIIYVLP), 168–188 (AVPSPLVAIIVMTIIAVTFHV), 220–240 (IIFPYSIALAFVGLLESLLTA), 259–279 (GQGIANIVTGFFGGMAGCAMI), 295–315 (SAFVAGAFLMFLIAVLSHVVV), 345–365 (APLTDSIVMVVTVVTVVVTDD), and 366–386 (LSKGVFVGVLLSAVFFVAKIS). The region spanning 389-478 (KIVSHAEDQK…ASKSLMKQMA (90 aa)) is the STAS domain.

It belongs to the SLC26A/SulP transporter (TC 2.A.53) family.

The protein resides in the cell membrane. This Bacillus subtilis (strain 168) protein is Putative sulfate transporter YbaR (ybaR).